The primary structure comprises 158 residues: Lipoprotein signal peptidase (158 aa).

3 consecutive transmembrane segments (helical) span residues 12-32 (LFWW…AWIV), 46-66 (IIPG…FSLF), and 71-91 (IWLR…AILG). Active-site residues include aspartate 124 and aspartate 140. Residues 135-155 (VFNVADIAINIGIVCLLWSAW) traverse the membrane as a helical segment.

The protein belongs to the peptidase A8 family.

It is found in the cell inner membrane. The catalysed reaction is Release of signal peptides from bacterial membrane prolipoproteins. Hydrolyzes -Xaa-Yaa-Zaa-|-(S,diacylglyceryl)Cys-, in which Xaa is hydrophobic (preferably Leu), and Yaa (Ala or Ser) and Zaa (Gly or Ala) have small, neutral side chains.. It participates in protein modification; lipoprotein biosynthesis (signal peptide cleavage). In terms of biological role, this protein specifically catalyzes the removal of signal peptides from prolipoproteins. In Thermosynechococcus vestitus (strain NIES-2133 / IAM M-273 / BP-1), this protein is Lipoprotein signal peptidase.